A 102-amino-acid chain; its full sequence is Carboxysome shell protein CsoS1C (102 aa).

The BMC domain maps to alanine 8 to alanine 93.

Belongs to the bacterial microcompartments protein family. CsoS1 subfamily. Homohexamer with a small central pore.

The protein resides in the carboxysome. In terms of biological role, one of shell proteins of the carboxysome, a polyhedral inclusion where RuBisCO (ribulose bisphosphate carboxylase, ccbL-ccbS) is sequestered. Assembles into hexamers which make sheets that form the facets of the polyhedral carboxysome. The shell probably limits the diffusion of CO(2) into and out of the carboxysome. This chain is Carboxysome shell protein CsoS1C, found in Hydrogenovibrio crunogenus (strain DSM 25203 / XCL-2) (Thiomicrospira crunogena).